We begin with the raw amino-acid sequence, 383 residues long: GA-binding protein subunit beta-1 (383 aa).

At S2 the chain carries N-acetylserine. ANK repeat units follow at residues 5–34 and 37–66; these read DLGK…PFTT and LGTS…SRDA. At K69 the chain carries N6-acetyllysine. ANK repeat units follow at residues 70-99, 103-132, and 136-166; these read VDRT…DVNA, LKMT…DVHT, and FCKT…QINT. K340 and K369 each carry N6-acetyllysine.

Heterotetramer of two alpha and two beta subunits. Interacts with HCFC1, causing repression of transcriptional activity. Post-translationally, acetylated by EP300/p300. Deacetylated by SIRT7, promoting heterotetramerization and activity.

It is found in the nucleus. Its function is as follows. Transcription factor capable of interacting with purine rich repeats (GA repeats). Acts as a master regulator of nuclear-encoded mitochondrial genes. This Bos taurus (Bovine) protein is GA-binding protein subunit beta-1 (GABPB1).